The following is a 226-amino-acid chain: MVCAPWLLAVVVVCVCNPGVGGQCWDSSHCKDLPSEDKILECTHLFRSGLQDESPEPRSAAQQSTEESLSLGILLAALTSGERALDADPEPHSDKRHSYSMEHFRWGKPIGHKRRPIKVYASSLEGGDSSEGTFPLQARRQLGSWEDEMVGALGNQGAKAQTKVVPRTLTVTGLQDKKDGSYRMGHFRWGSPTAIKRYGGFMKPYTKQSHKPLITLLKHITLKNEQ.

The N-terminal stretch at 1–22 is a signal peptide; it reads MVCAPWLLAVVVVCVCNPGVGG. The propeptide occupies 23–97; it reads QCWDSSHCKD…DPEPHSDKRH (75 aa). S98 carries the post-translational modification N-acetylserine; in Corticotropin. Y198 is subject to N-acetyltyrosine; in Beta-endorphin and Met-enkephalin.

It belongs to the POMC family. Specific enzymatic cleavages at paired basic residues yield the different active peptides.

Its subcellular location is the secreted. Functionally, stimulates the adrenal glands to release cortisol. Its function is as follows. Anorexigenic peptide. Increases the pigmentation of skin by increasing melanin production in melanocytes. Increases the pigmentation of skin by increasing melanin production in melanocytes. In terms of biological role, endogenous orexigenic opiate. Functionally, endogenous opiate. The protein is Pro-opiomelanocortin (pomc) of Oncorhynchus keta (Chum salmon).